The following is a 213-amino-acid chain: Holliday junction branch migration complex subunit RuvA (213 aa).

Positions 1-63 (MIGMLTGRVA…EDAFKLYGFL (63 aa)) are domain I. Residues 64 to 142 (DDIDRAWFVH…PTGRSFSIGL (79 aa)) are domain II. A flexible linker region spans residues 143 to 160 (PVHSDDGTTGGAPVAPAG). The segment at 161-213 (GDSLAREDAVSALVNLGYNESQARQAVAKILRDADSEAPLGDVIRLSLKELAA) is domain III.

This sequence belongs to the RuvA family. As to quaternary structure, homotetramer. Forms an RuvA(8)-RuvB(12)-Holliday junction (HJ) complex. HJ DNA is sandwiched between 2 RuvA tetramers; dsDNA enters through RuvA and exits via RuvB. An RuvB hexamer assembles on each DNA strand where it exits the tetramer. Each RuvB hexamer is contacted by two RuvA subunits (via domain III) on 2 adjacent RuvB subunits; this complex drives branch migration. In the full resolvosome a probable DNA-RuvA(4)-RuvB(12)-RuvC(2) complex forms which resolves the HJ.

The protein localises to the cytoplasm. In terms of biological role, the RuvA-RuvB-RuvC complex processes Holliday junction (HJ) DNA during genetic recombination and DNA repair, while the RuvA-RuvB complex plays an important role in the rescue of blocked DNA replication forks via replication fork reversal (RFR). RuvA specifically binds to HJ cruciform DNA, conferring on it an open structure. The RuvB hexamer acts as an ATP-dependent pump, pulling dsDNA into and through the RuvAB complex. HJ branch migration allows RuvC to scan DNA until it finds its consensus sequence, where it cleaves and resolves the cruciform DNA. This chain is Holliday junction branch migration complex subunit RuvA, found in Maricaulis maris (strain MCS10) (Caulobacter maris).